Here is a 199-residue protein sequence, read N- to C-terminus: dITP/XTP pyrophosphatase (199 aa).

Residue 7–12 participates in substrate binding; the sequence is TSNRGK. The Proton acceptor role is filled by D74. Residue D74 coordinates Mg(2+). Residues S75, 156–159, K179, and 184–185 each bind substrate; these read FGYD and HR.

Belongs to the HAM1 NTPase family. As to quaternary structure, homodimer. Mg(2+) serves as cofactor.

The enzyme catalyses XTP + H2O = XMP + diphosphate + H(+). It catalyses the reaction dITP + H2O = dIMP + diphosphate + H(+). It carries out the reaction ITP + H2O = IMP + diphosphate + H(+). Its function is as follows. Pyrophosphatase that catalyzes the hydrolysis of nucleoside triphosphates to their monophosphate derivatives, with a high preference for the non-canonical purine nucleotides XTP (xanthosine triphosphate), dITP (deoxyinosine triphosphate) and ITP. Seems to function as a house-cleaning enzyme that removes non-canonical purine nucleotides from the nucleotide pool, thus preventing their incorporation into DNA/RNA and avoiding chromosomal lesions. The chain is dITP/XTP pyrophosphatase from Sulfurimonas denitrificans (strain ATCC 33889 / DSM 1251) (Thiomicrospira denitrificans (strain ATCC 33889 / DSM 1251)).